We begin with the raw amino-acid sequence, 2467 residues long: Transcription factor TFIIIB component B'' homolog (2467 aa).

Disordered regions lie at residues 1-145 (MFRR…RYRI) and 159-243 (LRKE…VDDG). An interaction with ZBTB43 region spans residues 1-301 (MFRRARLSVK…TYSSFRKNYY (301 aa)). Residues 81-92 (AAESSTLSSASS) show a composition bias toward low complexity. Polar residues predominate over residues 99 to 118 (SSTSSLVQPSGSAPSQSRPL). Composition is skewed to basic and acidic residues over residues 133 to 144 (AKEKQPCSDRYR) and 177 to 186 (RPPDRSKMTM). The stretch at 144–177 (RIYKARKLREMLKEELRKEKKQWKNKFSTNESQR) forms a coiled coil. Acidic residues predominate over residues 231–242 (NDNEDVEEEVDD). The 51-residue stretch at 297–347 (RKNYYSKPWSNKETDMFFLAISMVGTDFSMIGQLFPHRARIEIKNKFKREE) folds into the Myb-like domain. A required for phosphorylation by CSNK2A1 region spans residues 357–472 (AFQEKRPFDF…QEKKRRRNQG (116 aa)). Disordered stretches follow at residues 380–513 (EEKR…ECNK), 576–720 (SADM…VKAA), 748–844 (PPQT…PATW), 866–893 (LTATASTKDSESDVKDSGRNDTASNAEM), 971–1200 (LQEN…SSKI), 1231–1270 (LGRHETDQGMPLPDALERFSDTNLSKPLPQEQQPLQVKPA), 1318–1388 (DSDQ…LVPI), 1409–1448 (LPVRGRLQRPRPNVQKARQRQIVEKGEARDIAKNEGPELQ), 1527–1561 (KAKPNLGGARRKDEQPGVEKGRTDESTALTAEDHL), 1592–1706 (IHSE…RASK), 1902–1926 (IVSKEQSNRDAAVEEEAVEETLPTR), 1977–2014 (IQRETEGDDSKAVELEDKSHAPVTAAETKEEEQSQCVG), 2058–2083 (LDSGQSFGESAAKEALKETPKGSDVP), 2179–2206 (LVVQDAPSLSPSRSGSSEKPPANLDLTS), 2260–2290 (GIFPTSESTHATSKPQKEHSEPTDTGSSGSL), and 2304–2449 (LPQS…EEVT). Residues 458 to 487 (EQDQNQEKKRRRNQGEANKQEATNLLERVL) are a coiled coil. A compositionally biased stretch (basic and acidic residues) spans 649 to 660 (AAEKNHMEKETM). The span at 809 to 824 (RFQKPKPNTGRRRRRI) shows a compositional bias: basic residues. Basic and acidic residues-rich tracts occupy residues 873–884 (KDSESDVKDSGR), 992–1002 (TGKDLAMKEST), 1009–1041 (TEEREAYSEETERQEKISALIKDAEEAKARGEM), 1089–1098 (EGKELNLRET), 1112–1130 (EKTDIEETNGDPKETERES), and 1150–1170 (DLGKPEKIDVAPREREPEEHS). Composition is skewed to polar residues over residues 1180-1200 (LSSSDGSTGSPQDKVNISSKI), 1251-1265 (DTNLSKPLPQEQQPL), 1318-1330 (DSDQAALSPQHNV), and 1364-1382 (PPNSSEPKEGSQLTPNQEN). Composition is skewed to basic and acidic residues over residues 1429–1448 (QIVEKGEARDIAKNEGPELQ), 1536–1561 (RRKDEQPGVEKGRTDESTALTAEDHL), and 1592–1603 (IHSEESGSDRND). Polar residues-rich tracts occupy residues 1621–1642 (EQPTSLGLEEQSLSKQIRSSCP) and 1650–1665 (YPKTVSSRRTPLSSAS). The segment covering 1688 to 1697 (RGSKRIRGKT) has biased composition (basic residues). Composition is skewed to basic and acidic residues over residues 1902–1913 (IVSKEQSNRDAA), 1977–1996 (IQRETEGDDSKAVELEDKSH), and 2068–2078 (AAKEALKETPK). Over residues 2185 to 2199 (PSLSPSRSGSSEKPP) the composition is skewed to low complexity. Composition is skewed to polar residues over residues 2262-2273 (FPTSESTHATSK), 2319-2334 (PASNSEQRDIVTSSSK), and 2414-2429 (TAGSPESSAAQVSSDQ).

As to quaternary structure, component of TFIIIB complex. The TFIIIB complex has two activities, alpha and beta. The TFIIIB-alpha and TFIIIB-beta activities are required for transcription of genes with TFIIIC-bound internal promoters and PSE transcription factor-bound external promoters, respectively. The TFIIIB-alpha activity complex is composed of TBP, BDP1, and a complex containing both BRF2 and at least four stably associated proteins; YY1 facilitates the formation of TFIIIB-alpha activity complex. The TFIIIB-beta activity complex is composed of TBP, BDP1, and BRF1. Interacts with BRF1; this interaction diminishes during mitosis resulting in the release of BDP1 from chromosomal templates. Component of TFIIIC complex. The TFIIIC complex has two activities, C1 and C2. The TFIIIC2 activity complex is only required for transcription of the 'classical' pol III genes whereas the TFIIIC1 activity complex is required for transcription of all pol III genes. The TFIIIC1 activity complex is composed at least of BDP1. Interacts with ZBTB43. In terms of processing, phosphorylated by CSNK2A1 during mitosis, resulting in its release from chromatin and suppression of polymerase III transcription. As to expression, expressed in the cochlea, particularly in the spiral ligament, the capillaries of the stria vascularis and the basilar membrane.

It is found in the nucleus. Its function is as follows. General activator of RNA polymerase III transcription. Requires for transcription from all three types of polymerase III promoters. Requires for transcription of genes with internal promoter elements and with promoter elements upstream of the initiation site. In Mus musculus (Mouse), this protein is Transcription factor TFIIIB component B'' homolog (Bdp1).